We begin with the raw amino-acid sequence, 503 residues long: Potassium voltage-gated channel subfamily V member 1 (503 aa).

Residues 1-213 (MELLPPRGRA…EKPGSCTAAR (213 aa)) are Cytoplasmic-facing. Residues 214–234 (IFGVISIIFVAVSIVNMALMS) form a helical membrane-spanning segment. Topologically, residues 235 to 246 (AELSWLDPQLLE) are extracellular. A helical transmembrane segment spans residues 247-267 (ILEYVCISWFTGEFVLRFLCV). The Cytoplasmic segment spans residues 268 to 279 (RDRCRFLRKVPN). Residues 280-300 (IIDLLAILPFYITLLVESLSG) traverse the membrane as a helical segment. Over 301–312 (SQTTQELENVGR) the chain is Extracellular. Residues 313 to 334 (IVQVLRLLRALRMLKLGRHSTG) traverse the membrane as a helical; Voltage-sensor segment. The Cytoplasmic portion of the chain corresponds to 335-348 (LRSLGMTITQCYEE). The chain crosses the membrane as a helical span at residues 349–369 (VGLLLLFLSVGISIFSTVEYF). The Selectivity filter motif lies at 395–400 (TVGYGD). A helical transmembrane segment spans residues 410–430 (IVAFMCILSGILVLALPIAII). The Cytoplasmic portion of the chain corresponds to 431 to 503 (NDRFSACYFT…RSSGGDDFWF (73 aa)).

This sequence belongs to the potassium channel family. V (TC 1.A.1.2) subfamily. Kv8.1/KCNV1 sub-subfamily. As to quaternary structure, heteromultimer with KCNB1 and KCNB2. Interacts with KCNC4 and KCND1.

The protein resides in the cell membrane. Potassium channel subunit that does not form functional channels by itself. Modulates KCNB1 and KCNB2 channel activity by shifting the threshold for inactivation to more negative values and by slowing the rate of inactivation. Can down-regulate the channel activity of KCNB1, KCNB2, KCNC4 and KCND1, possibly by trapping them in intracellular membranes. The sequence is that of Potassium voltage-gated channel subfamily V member 1 (KCNV1) from Bos taurus (Bovine).